A 308-amino-acid polypeptide reads, in one-letter code: tRNA dimethylallyltransferase (308 aa).

11–18 (GPTGIGKT) lines the ATP pocket. Position 13–18 (13–18 (TGIGKT)) interacts with substrate. The interval 36 to 39 (DSMQ) is interaction with substrate tRNA.

The protein belongs to the IPP transferase family. In terms of assembly, monomer. Requires Mg(2+) as cofactor.

It catalyses the reaction adenosine(37) in tRNA + dimethylallyl diphosphate = N(6)-dimethylallyladenosine(37) in tRNA + diphosphate. In terms of biological role, catalyzes the transfer of a dimethylallyl group onto the adenine at position 37 in tRNAs that read codons beginning with uridine, leading to the formation of N6-(dimethylallyl)adenosine (i(6)A). The sequence is that of tRNA dimethylallyltransferase from Lactobacillus gasseri (strain ATCC 33323 / DSM 20243 / BCRC 14619 / CIP 102991 / JCM 1131 / KCTC 3163 / NCIMB 11718 / NCTC 13722 / AM63).